Consider the following 466-residue polypeptide: ATP synthase subunit beta (466 aa).

Residue 153–160 (GGAGVGKT) coordinates ATP.

It belongs to the ATPase alpha/beta chains family. In terms of assembly, F-type ATPases have 2 components, CF(1) - the catalytic core - and CF(0) - the membrane proton channel. CF(1) has five subunits: alpha(3), beta(3), gamma(1), delta(1), epsilon(1). CF(0) has three main subunits: a(1), b(2) and c(9-12). The alpha and beta chains form an alternating ring which encloses part of the gamma chain. CF(1) is attached to CF(0) by a central stalk formed by the gamma and epsilon chains, while a peripheral stalk is formed by the delta and b chains.

It localises to the cell membrane. The catalysed reaction is ATP + H2O + 4 H(+)(in) = ADP + phosphate + 5 H(+)(out). In terms of biological role, produces ATP from ADP in the presence of a proton gradient across the membrane. The catalytic sites are hosted primarily by the beta subunits. In Oenococcus oeni (strain ATCC BAA-331 / PSU-1), this protein is ATP synthase subunit beta.